We begin with the raw amino-acid sequence, 144 residues long: Large ribosomal subunit protein uL16 (144 aa).

Belongs to the universal ribosomal protein uL16 family. As to quaternary structure, part of the 50S ribosomal subunit.

Binds 23S rRNA and is also seen to make contacts with the A and possibly P site tRNAs. In Clostridium perfringens (strain ATCC 13124 / DSM 756 / JCM 1290 / NCIMB 6125 / NCTC 8237 / Type A), this protein is Large ribosomal subunit protein uL16.